The sequence spans 39 residues: Potassium channel toxin alpha-KTx 2.24 (39 aa).

3 disulfide bridges follow: Cys7-Cys29, Cys13-Cys34, and Cys17-Cys36.

Belongs to the short scorpion toxin superfamily. Potassium channel inhibitor family. Alpha-KTx 02 subfamily. As to expression, expressed by the venom gland.

Its subcellular location is the secreted. Blocks human voltage-gated potassium (Kv) channels Kv1.1/KCNA, Kv1.2/KCNA2 and Kv1.3/KCNA3. Exhibits high affinity for Kv1.2/KCNA2 and selectivity over Kv1.1/KCNA and Kv1.3/KCNA3. This Centruroides bonito (Scorpion) protein is Potassium channel toxin alpha-KTx 2.24.